Consider the following 466-residue polypeptide: Ribulose bisphosphate carboxylase large chain (466 aa).

Lys-5 carries the N6,N6,N6-trimethyllysine modification. Substrate is bound by residues Asn-114 and Thr-164. Lys-166 (proton acceptor) is an active-site residue. A substrate-binding site is contributed by Lys-168. Residues Lys-192, Asp-194, and Glu-195 each contribute to the Mg(2+) site. The residue at position 192 (Lys-192) is an N6-carboxylysine. The active-site Proton acceptor is the His-285. Substrate contacts are provided by Arg-286, His-318, and Ser-370.

This sequence belongs to the RuBisCO large chain family. Type I subfamily. As to quaternary structure, heterohexadecamer of 8 large chains and 8 small chains; disulfide-linked. The disulfide link is formed within the large subunit homodimers. Mg(2+) serves as cofactor. Post-translationally, the disulfide bond which can form in the large chain dimeric partners within the hexadecamer appears to be associated with oxidative stress and protein turnover.

It is found in the plastid. The protein localises to the chloroplast. The enzyme catalyses 2 (2R)-3-phosphoglycerate + 2 H(+) = D-ribulose 1,5-bisphosphate + CO2 + H2O. It catalyses the reaction D-ribulose 1,5-bisphosphate + O2 = 2-phosphoglycolate + (2R)-3-phosphoglycerate + 2 H(+). Functionally, ruBisCO catalyzes two reactions: the carboxylation of D-ribulose 1,5-bisphosphate, the primary event in carbon dioxide fixation, as well as the oxidative fragmentation of the pentose substrate in the photorespiration process. Both reactions occur simultaneously and in competition at the same active site. This is Ribulose bisphosphate carboxylase large chain from Drosophyllum lusitanicum (Portuguese sundew).